Reading from the N-terminus, the 292-residue chain is Carbapenem-hydrolyzing beta-lactamase transcriptional activator (292 aa).

One can recognise an HTH lysR-type domain in the interval 5–62; it reads IPLNALRAFEASARYLNFTKAGLELHVSQAAVSQHVRTLEAILGVNLFKRLPRGLQLT. The H-T-H motif DNA-binding region spans 22–41; that stretch reads FTKAGLELHVSQAAVSQHVR.

This sequence belongs to the LysR transcriptional regulatory family.

Its function is as follows. This protein is a positive regulator of gene expression of carbapenem-hydrolyzing beta-lactamase (smeA). Seems to also be a repressor of its own transcription. The sequence is that of Carbapenem-hydrolyzing beta-lactamase transcriptional activator (smeR) from Serratia marcescens.